A 164-amino-acid chain; its full sequence is NADH-quinone oxidoreductase subunit I (164 aa).

2 consecutive 4Fe-4S ferredoxin-type domains span residues Leu55–Glu85 and Thr95–Asn124. [4Fe-4S] cluster contacts are provided by Cys65, Cys68, Cys71, Cys75, Cys104, Cys107, Cys110, and Cys114.

It belongs to the complex I 23 kDa subunit family. As to quaternary structure, NDH-1 is composed of 14 different subunits. Subunits NuoA, H, J, K, L, M, N constitute the membrane sector of the complex. [4Fe-4S] cluster serves as cofactor.

It localises to the cell inner membrane. It catalyses the reaction a quinone + NADH + 5 H(+)(in) = a quinol + NAD(+) + 4 H(+)(out). In terms of biological role, NDH-1 shuttles electrons from NADH, via FMN and iron-sulfur (Fe-S) centers, to quinones in the respiratory chain. The immediate electron acceptor for the enzyme in this species is believed to be ubiquinone. Couples the redox reaction to proton translocation (for every two electrons transferred, four hydrogen ions are translocated across the cytoplasmic membrane), and thus conserves the redox energy in a proton gradient. This chain is NADH-quinone oxidoreductase subunit I, found in Jannaschia sp. (strain CCS1).